Reading from the N-terminus, the 447-residue chain is Sensor protein VanSB (447 aa).

A run of 2 helical transmembrane segments spans residues Val10 to Ala30 and Gly137 to Phe155. In terms of domain architecture, HAMP spans Arg157–Ala208. Positions Ala230–Ser445 constitute a Histidine kinase domain. At His233 the chain carries Phosphohistidine; by autocatalysis.

It is found in the cell membrane. It catalyses the reaction ATP + protein L-histidine = ADP + protein N-phospho-L-histidine.. In terms of biological role, member of the two-component regulatory system VanSB/VanRB. Activates the transcription of vanSB, vanYB and vanW in response to vancomycin which results in vancomycin resistance. VanSB may activate VanRB by phosphorylation. May also act as a phospho-VanRB phosphatase. The polypeptide is Sensor protein VanSB (vanSB) (Enterococcus faecalis (strain ATCC 700802 / V583)).